Consider the following 66-residue polypeptide: Large ribosomal subunit protein bL33c (66 aa).

It belongs to the bacterial ribosomal protein bL33 family.

It localises to the plastid. Its subcellular location is the chloroplast. This is Large ribosomal subunit protein bL33c from Oryza nivara (Indian wild rice).